Here is a 213-residue protein sequence, read N- to C-terminus: MSNVWHNRTLALAGIIQALNSVQQIARQGNAPIDTVAASLASVFKMNPKSAEDVYGNIEGVSVGLQVLNQQLNRKSYRTDPELLRYLTNIMYLEQRLKKRPRILAQIADQIKHIEPQTEELSPADPLIIARLADTYVNTISTLTPRIQIRGEETHLRQPENIERVRALLLAAIRSAVLWRQMGGTRLHLLFQGRQLLYETHTLLKRIPRAGAA.

Belongs to the HflD family.

Its subcellular location is the cytoplasm. The protein localises to the cell inner membrane. The sequence is that of High frequency lysogenization protein HflD homolog from Nitrosococcus oceani (strain ATCC 19707 / BCRC 17464 / JCM 30415 / NCIMB 11848 / C-107).